Consider the following 96-residue polypeptide: Exodeoxyribonuclease 7 small subunit (96 aa).

The segment at 73-96 (RAPEQSAANDVSAPGSAEEHDHGR) is disordered.

It belongs to the XseB family. Heterooligomer composed of large and small subunits.

It localises to the cytoplasm. The catalysed reaction is Exonucleolytic cleavage in either 5'- to 3'- or 3'- to 5'-direction to yield nucleoside 5'-phosphates.. In terms of biological role, bidirectionally degrades single-stranded DNA into large acid-insoluble oligonucleotides, which are then degraded further into small acid-soluble oligonucleotides. This Acidothermus cellulolyticus (strain ATCC 43068 / DSM 8971 / 11B) protein is Exodeoxyribonuclease 7 small subunit.